The primary structure comprises 186 residues: UPF0301 protein NTHI0415 (186 aa).

It belongs to the UPF0301 (AlgH) family.

This is UPF0301 protein NTHI0415 from Haemophilus influenzae (strain 86-028NP).